Reading from the N-terminus, the 313-residue chain is Porphobilinogen deaminase (313 aa).

Residue C242 is modified to S-(dipyrrolylmethanemethyl)cysteine.

This sequence belongs to the HMBS family. In terms of assembly, monomer. It depends on dipyrromethane as a cofactor.

The catalysed reaction is 4 porphobilinogen + H2O = hydroxymethylbilane + 4 NH4(+). The protein operates within porphyrin-containing compound metabolism; protoporphyrin-IX biosynthesis; coproporphyrinogen-III from 5-aminolevulinate: step 2/4. Functionally, tetrapolymerization of the monopyrrole PBG into the hydroxymethylbilane pre-uroporphyrinogen in several discrete steps. This chain is Porphobilinogen deaminase, found in Pseudomonas aeruginosa (strain LESB58).